A 176-amino-acid polypeptide reads, in one-letter code: Beta-carotene hydroxylase (176 aa).

The region spanning 10 to 126 is the Fatty acid hydroxylase domain; that stretch reads LSVIAMEGIA…AHRLHHAVRG (117 aa). Positions 152–176 are disordered; sequence HGRPPKRDAAKDRPDAASPSSSSPE. Over residues 156–166 the composition is skewed to basic and acidic residues; that stretch reads PKRDAAKDRPD. Residues 167–176 are compositionally biased toward low complexity; sequence AASPSSSSPE.

It belongs to the sterol desaturase family.

It functions in the pathway carotenoid biosynthesis; zeaxanthin biosynthesis. Catalyzes the hydroxylation reaction from beta-carotene to zeaxanthin. The chain is Beta-carotene hydroxylase (crtZ) from Pseudescherichia vulneris (Escherichia vulneris).